The chain runs to 303 residues: Uricase (303 aa).

At Ala2 the chain carries N-acetylalanine. N6-acetyllysine; alternate occurs at positions 10 and 23. Residues Lys10 and Lys23 each carry the N6-succinyllysine; alternate modification. Lys23 acts as the Charge relay system in catalysis. Residues Lys27 and Lys36 each carry the N6-acetyllysine modification. A phosphoserine mark is found at Ser39 and Ser63. Thr68 functions as the Charge relay system in the catalytic mechanism. The urate site is built by Thr68 and Asp69. N6-acetyllysine occurs at positions 118, 122, and 164. Urate is bound at residue Phe170. Lys175 and Lys185 each carry N6-acetyllysine. Urate is bound at residue Arg187. N6-acetyllysine; alternate is present on Lys220. Lys220 carries the N6-succinyllysine; alternate modification. Ser231 carries the phosphoserine modification. Urate is bound by residues Val234, Gln235, and Asn261. His263 serves as the catalytic Charge relay system. Lys277 carries the N6-acetyllysine modification. Tyr288 bears the Phosphotyrosine mark. A Microbody targeting signal motif is present at residues 301–303; that stretch reads SRL.

Belongs to the uricase family. Expressed in liver. Not detected in other tissues tested.

It localises to the peroxisome. It carries out the reaction urate + O2 + H2O = 5-hydroxyisourate + H2O2. It participates in purine metabolism; urate degradation; (S)-allantoin from urate: step 1/3. Competitively inhibited by xanthine. In terms of biological role, catalyzes the oxidation of uric acid to 5-hydroxyisourate, which is further processed to form (S)-allantoin. The polypeptide is Uricase (Uox) (Rattus norvegicus (Rat)).